A 391-amino-acid polypeptide reads, in one-letter code: MIEVVAELSRGPVFLAGEALECVVTVTNPLPPTATSASSEALAWASAQIHCQFHASESRVALPPPDSSQPDVQPDSQTVFLPHRGERGQCILSTPPKILFCDLRLDPGESKSYSYSEVLPIEGPPSFRGQSVKYVYKLTIGCQRVNSPITLLRVPLRVLVLTGLQDVRFPQDEAVAPSSPFLEEDEGGKKDSWLAELAGERLMAATSCRSLHLYNISDGRGKVGTFGIFKSVYRLGEDVVGTLNLGEGTVACLQFSVSLQTEERVQPEYQRRRGAGGVPSVSHVTHARHQESCLHTTRTSFSLPIPLSSTPGFCTAIVSLKWRLHFEFVTSREPGLVLLPPVEQPEPTTWTGPEQVPVDTFSWDLPIKVLPTSPTLASYAAPGPSTSTITI.

This sequence belongs to the RGP1 family. As to quaternary structure, forms a complex with RIC1; the interaction enhances RAB6A GTPase activity. Interacts with RIC1. Interacts with RAB6A; the interaction is direct with a preference for RAB6A-GDP. Interacts with RAB33B.

The protein resides in the cytoplasm. It localises to the cytosol. The protein localises to the membrane. Its function is as follows. The RIC1-RGP1 complex acts as a guanine nucleotide exchange factor (GEF), which activates RAB6A by exchanging bound GDP for free GTP and may thereby required for efficient fusion of endosome-derived vesicles with the Golgi compartment. The RIC1-RGP1 complex participates in the recycling of mannose-6-phosphate receptors. The polypeptide is RAB6A-GEF complex partner protein 2 (Homo sapiens (Human)).